Here is a 43-residue protein sequence, read N- to C-terminus: Photosystem I reaction center subunit IX (43 aa).

Residues 7–27 form a helical membrane-spanning segment; that stretch reads YLSVAPVLSTLWFGSLAGLLI.

This sequence belongs to the PsaJ family.

It localises to the plastid. It is found in the chloroplast thylakoid membrane. Functionally, may help in the organization of the PsaE and PsaF subunits. This chain is Photosystem I reaction center subunit IX, found in Aethionema cordifolium (Lebanon stonecress).